The chain runs to 116 residues: Cation channel sperm-associated auxiliary subunit TMEM262 (116 aa).

The Cytoplasmic portion of the chain corresponds to 1–16 (MRWRDRIAVLCFPPGL). A helical membrane pass occupies residues 17–38 (MLTVAALILFFIHMGVFASDVH). Residues 39 to 51 (NFCVIHNYDHMSF) lie on the Extracellular side of the membrane. The chain crosses the membrane as a helical span at residues 52–72 (RYTVVLIFSQVISIGWAAMGS). The Cytoplasmic segment spans residues 73–84 (LYAEMTGDKFLR). Residues 85 to 107 (CFALTILILNGAMFFNRLCLEFL) form a helical membrane-spanning segment. Residues 108-116 (AINYREERH) are Extracellular-facing.

In terms of assembly, component of the CatSper complex or CatSpermasome composed of the core pore-forming members CATSPER1, CATSPER2, CATSPER3 and CATSPER4 as well as auxiliary members CATSPERB, CATSPERG, CATSPERD, CATSPERE, CATSPERZ, C2CD6/CATSPERT, SLCO6C1, TMEM249, TMEM262 and EFCAB9. HSPA1 may be an additional auxiliary complex member. The core complex members CATSPER1, CATSPER2, CATSPER3 and CATSPER4 form a heterotetrameric channel. The auxiliary CATSPERB, CATSPERG2, CATSPERD and CATSPERE subunits form a pavilion-like structure over the pore which stabilizes the complex through interactions with CATSPER4, CATSPER3, CATSPER1 and CATSPER2 respectively. SLCO6C1 interacts with CATSPERE and TMEM262/CATSPERH interacts with CATSPERB, further stabilizing the complex. C2CD6/CATSPERT interacts at least with CATSPERD and is required for targeting the CatSper complex in the flagellar membrane.

Its subcellular location is the cell projection. It localises to the cilium. It is found in the flagellum membrane. Auxiliary component of the CatSper complex, a complex involved in sperm cell hyperactivation. This is Cation channel sperm-associated auxiliary subunit TMEM262 from Mus musculus (Mouse).